We begin with the raw amino-acid sequence, 444 residues long: UDP-N-acetylmuramate--L-alanine ligase (444 aa).

110-116 (GAHGKTS) contacts ATP.

This sequence belongs to the MurCDEF family.

The protein resides in the cytoplasm. The catalysed reaction is UDP-N-acetyl-alpha-D-muramate + L-alanine + ATP = UDP-N-acetyl-alpha-D-muramoyl-L-alanine + ADP + phosphate + H(+). It functions in the pathway cell wall biogenesis; peptidoglycan biosynthesis. Cell wall formation. The polypeptide is UDP-N-acetylmuramate--L-alanine ligase (Streptococcus pneumoniae (strain ATCC 700669 / Spain 23F-1)).